We begin with the raw amino-acid sequence, 191 residues long: Fe/S biogenesis protein NfuA (191 aa).

Residues Cys149 and Cys152 each coordinate [4Fe-4S] cluster.

Belongs to the NfuA family. Homodimer. It depends on [4Fe-4S] cluster as a cofactor.

Involved in iron-sulfur cluster biogenesis. Binds a 4Fe-4S cluster, can transfer this cluster to apoproteins, and thereby intervenes in the maturation of Fe/S proteins. Could also act as a scaffold/chaperone for damaged Fe/S proteins. The protein is Fe/S biogenesis protein NfuA of Klebsiella pneumoniae (strain 342).